The sequence spans 802 residues: Vacuolar membrane protease (802 aa).

The Cytoplasmic portion of the chain corresponds to 1-13; the sequence is MARYNPLAFTSGP. The helical transmembrane segment at 14 to 34 threads the bilayer; the sequence is VVFFITITYTALLIALLLTHL. The Vacuolar segment spans residues 35–357; that stretch reads TLPSYPSHPP…KVFIVFQLHT (323 aa). Residues N48, N102, N105, and N112 are each glycosylated (N-linked (GlcNAc...) asparagine). H152 and D164 together coordinate Zn(2+). E198 (proton acceptor) is an active-site residue. Residues E199, E224, and H297 each coordinate Zn(2+). Residues 358–378 form a helical membrane-spanning segment; sequence FFALCVTLLVVAPLTLIGLAW. The Cytoplasmic segment spans residues 379–389; it reads SLHKADRNYLF. A helical membrane pass occupies residues 390–409; the sequence is ARKAFVYSADDDEPIHLYGW. The Vacuolar portion of the chain corresponds to 410–423; it reads RGFFRFPIAFGIAT. The chain crosses the membrane as a helical span at residues 424 to 444; the sequence is SIVVGLAMMLSAWFAVSWFLL. Over 445–457 the chain is Cytoplasmic; that stretch reads HGADAMRPSALQR. The helical transmembrane segment at 458–478 threads the bilayer; it reads MYSLLWLFIGSFCLLVFFTIL. Residues 479-490 are Vacuolar-facing; the sequence is ANNHQVAAGYPS. A helical membrane pass occupies residues 491 to 511; it reads LFCFATVFLANVLSFLELFLA. The Cytoplasmic portion of the chain corresponds to 512–609; sequence PPKSAYAWNV…EQEWSGKLPS (98 aa). Disordered stretches follow at residues 528 to 554 and 570 to 603; these read GSRP…ATET and AGRR…EQEW. Residues 610–630 traverse the membrane as a helical segment; it reads WIWIVQFSLLAPMIVILVGQI. Over 631–649 the chain is Vacuolar; that stretch reads ALLLTSALYQTPSDGNSPL. The chain crosses the membrane as a helical span at residues 650-670; that stretch reads YIYTSIAALAVFLVAPIGPFI. The Cytoplasmic portion of the chain corresponds to 671 to 677; it reads HRFTHHV. The chain crosses the membrane as a helical span at residues 678–698; sequence PTFLFLLCVATTIYNLVAFPF. Residues 699-802 are Vacuolar-facing; it reads SEQHKLKVYF…HDDSNNRGRR (104 aa). 2 N-linked (GlcNAc...) asparagine glycosylation sites follow: N746 and N779.

The protein belongs to the peptidase M28 family. The cofactor is Zn(2+).

It is found in the vacuole membrane. May be involved in vacuolar sorting and osmoregulation. The sequence is that of Vacuolar membrane protease from Leptosphaeria maculans (strain JN3 / isolate v23.1.3 / race Av1-4-5-6-7-8) (Blackleg fungus).